A 177-amino-acid chain; its full sequence is Probable DNA-directed RNA polymerase subunit delta (177 aa).

The region spanning 14–81 is the HTH HARE-type domain; that stretch reads CSMIEVVHSV…GENRWGLRSW (68 aa). The segment at 93-177 is disordered; it reads PQPKPKKKRK…ETEEEEEEEL (85 aa). The segment covering 106-177 has biased composition (acidic residues); sequence DGFDDYIEED…ETEEEEEEEL (72 aa).

Belongs to the RpoE family. RNAP is composed of a core of 2 alpha, a beta and a beta' subunits. The core is associated with a delta subunit and one of several sigma factors.

Its function is as follows. Participates in both the initiation and recycling phases of transcription. In the presence of the delta subunit, RNAP displays an increased specificity of transcription, a decreased affinity for nucleic acids, and an increased efficiency of RNA synthesis because of enhanced recycling. This Bacillus cereus (strain AH187) protein is Probable DNA-directed RNA polymerase subunit delta.